The sequence spans 152 residues: Holo-[acyl-carrier-protein] synthase (152 aa).

Mg(2+) contacts are provided by Asp-7 and Glu-60.

Belongs to the P-Pant transferase superfamily. AcpS family. The cofactor is Mg(2+).

It localises to the cytoplasm. It catalyses the reaction apo-[ACP] + CoA = holo-[ACP] + adenosine 3',5'-bisphosphate + H(+). Its function is as follows. Transfers the 4'-phosphopantetheine moiety from coenzyme A to a Ser of acyl-carrier-protein. This chain is Holo-[acyl-carrier-protein] synthase, found in Bifidobacterium adolescentis (strain ATCC 15703 / DSM 20083 / NCTC 11814 / E194a).